We begin with the raw amino-acid sequence, 282 residues long: Hydroxyacylglutathione hydrolase-like protein (282 aa).

Zn(2+)-binding residues include H54, H56, D58, H59, H110, D134, and H173.

This sequence belongs to the metallo-beta-lactamase superfamily. Glyoxalase II family. Zn(2+) serves as cofactor.

Its function is as follows. Hydrolase acting on ester bonds. This is Hydroxyacylglutathione hydrolase-like protein (HAGHL) from Gallus gallus (Chicken).